The following is a 155-amino-acid chain: uncharacterized protein (155 aa).

The HTH asnC-type domain occupies 4 to 65; that stretch reads IDEIDEVIVR…VVDPSFFGEF (62 aa). The H-T-H motif DNA-binding region spans 23–42; that stretch reads LTELGRKVGLTASAVKNRIE.

This is an uncharacterized protein from Pyrococcus horikoshii (strain ATCC 700860 / DSM 12428 / JCM 9974 / NBRC 100139 / OT-3).